A 29-amino-acid chain; its full sequence is Cyclotide vibi-B (29 aa).

The segment at residues 1 to 29 (GLPVCGETCFGGTCNTPGCTCSYPICTRN) is a cross-link (cyclopeptide (Gly-Asn)). Intrachain disulfides connect C5/C19, C9/C21, and C14/C26.

This is a cyclic peptide.

Its function is as follows. Probably participates in a plant defense mechanism. The sequence is that of Cyclotide vibi-B from Viola biflora (Yellow wood violet).